The chain runs to 550 residues: Hydroxylamine reductase (550 aa).

The [4Fe-4S] cluster site is built by Cys-7, Cys-10, Cys-19, and Cys-25. Residues His-244, Glu-268, Cys-312, Cys-405, Cys-433, Cys-458, Glu-493, and Lys-495 each coordinate hybrid [4Fe-2O-2S] cluster. A Cysteine persulfide modification is found at Cys-405.

This sequence belongs to the HCP family. The cofactor is [4Fe-4S] cluster. Hybrid [4Fe-2O-2S] cluster serves as cofactor.

It localises to the cytoplasm. The catalysed reaction is A + NH4(+) + H2O = hydroxylamine + AH2 + H(+). Functionally, catalyzes the reduction of hydroxylamine to form NH(3) and H(2)O. This chain is Hydroxylamine reductase, found in Porphyromonas gingivalis (strain ATCC 33277 / DSM 20709 / CIP 103683 / JCM 12257 / NCTC 11834 / 2561).